Here is a 292-residue protein sequence, read N- to C-terminus: 4-hydroxy-tetrahydrodipicolinate synthase (292 aa).

Residue T45 participates in pyruvate binding. Catalysis depends on Y133, which acts as the Proton donor/acceptor. K161 (schiff-base intermediate with substrate) is an active-site residue. Residue I203 coordinates pyruvate.

Belongs to the DapA family. In terms of assembly, homodimer.

The protein resides in the cytoplasm. The enzyme catalyses L-aspartate 4-semialdehyde + pyruvate = (2S,4S)-4-hydroxy-2,3,4,5-tetrahydrodipicolinate + H2O + H(+). It participates in amino-acid biosynthesis; L-lysine biosynthesis via DAP pathway; (S)-tetrahydrodipicolinate from L-aspartate: step 3/4. In terms of biological role, catalyzes the condensation of (S)-aspartate-beta-semialdehyde [(S)-ASA] and pyruvate to 4-hydroxy-tetrahydrodipicolinate (HTPA). This chain is 4-hydroxy-tetrahydrodipicolinate synthase, found in Ectopseudomonas mendocina (strain ymp) (Pseudomonas mendocina).